The primary structure comprises 448 residues: Adenylosuccinate synthetase (448 aa).

Residues 22–28 (GDEGKGK) and 50–52 (GHT) contribute to the GTP site. Aspartate 23 (proton acceptor) is an active-site residue. Mg(2+)-binding residues include aspartate 23 and glycine 50. IMP-binding positions include 23–26 (DEGK), 48–51 (NAGH), threonine 139, arginine 153, glutamine 234, threonine 249, and arginine 321. The active-site Proton donor is the histidine 51. Substrate is bound at residue 317 to 323 (SVTGRPR). GTP is bound by residues arginine 323, 349–351 (KLD), and 431–433 (STG).

It belongs to the adenylosuccinate synthetase family. In terms of assembly, homodimer. Requires Mg(2+) as cofactor.

The protein localises to the cytoplasm. The enzyme catalyses IMP + L-aspartate + GTP = N(6)-(1,2-dicarboxyethyl)-AMP + GDP + phosphate + 2 H(+). The protein operates within purine metabolism; AMP biosynthesis via de novo pathway; AMP from IMP: step 1/2. Its function is as follows. Plays an important role in the de novo pathway of purine nucleotide biosynthesis. Catalyzes the first committed step in the biosynthesis of AMP from IMP. The sequence is that of Adenylosuccinate synthetase from Burkholderia thailandensis (strain ATCC 700388 / DSM 13276 / CCUG 48851 / CIP 106301 / E264).